Reading from the N-terminus, the 303-residue chain is Pyridoxal 5'-phosphate synthase subunit PdxS (303 aa).

Asp33 is a binding site for D-ribose 5-phosphate. Lys90 acts as the Schiff-base intermediate with D-ribose 5-phosphate in catalysis. Gly162 is a D-ribose 5-phosphate binding site. Residue Arg174 participates in D-glyceraldehyde 3-phosphate binding. D-ribose 5-phosphate contacts are provided by residues Gly223 and 244–245; that span reads GS.

This sequence belongs to the PdxS/SNZ family. In the presence of PdxT, forms a dodecamer of heterodimers.

The enzyme catalyses aldehydo-D-ribose 5-phosphate + D-glyceraldehyde 3-phosphate + L-glutamine = pyridoxal 5'-phosphate + L-glutamate + phosphate + 3 H2O + H(+). Its pathway is cofactor biosynthesis; pyridoxal 5'-phosphate biosynthesis. Functionally, catalyzes the formation of pyridoxal 5'-phosphate from ribose 5-phosphate (RBP), glyceraldehyde 3-phosphate (G3P) and ammonia. The ammonia is provided by the PdxT subunit. Can also use ribulose 5-phosphate and dihydroxyacetone phosphate as substrates, resulting from enzyme-catalyzed isomerization of RBP and G3P, respectively. The polypeptide is Pyridoxal 5'-phosphate synthase subunit PdxS (Streptomyces coelicolor (strain ATCC BAA-471 / A3(2) / M145)).